The following is a 955-amino-acid chain: 2-oxoglutarate dehydrogenase E1 component (955 aa).

It belongs to the alpha-ketoglutarate dehydrogenase family. As to quaternary structure, homodimer. Part of the 2-oxoglutarate dehydrogenase (OGDH) complex composed of E1 (2-oxoglutarate dehydrogenase), E2 (dihydrolipoamide succinyltransferase) and E3 (dihydrolipoamide dehydrogenase); the complex contains multiple copies of the three enzymatic components (E1, E2 and E3). The cofactor is thiamine diphosphate.

It catalyses the reaction N(6)-[(R)-lipoyl]-L-lysyl-[protein] + 2-oxoglutarate + H(+) = N(6)-[(R)-S(8)-succinyldihydrolipoyl]-L-lysyl-[protein] + CO2. In terms of biological role, E1 component of the 2-oxoglutarate dehydrogenase (OGDH) complex which catalyzes the decarboxylation of 2-oxoglutarate, the first step in the conversion of 2-oxoglutarate to succinyl-CoA and CO(2). The polypeptide is 2-oxoglutarate dehydrogenase E1 component (Bacillus cereus (strain ATCC 10987 / NRS 248)).